The sequence spans 180 residues: MISRASAVYDKLKQAERNIRGDESMQTLDAPIYEVKQESDWYKSEKKRKEDINSFFDKFEEKYGVKEGFSFYHSEYFGVYEGTEAYEIFKNDIVKNQVDGFYAFKKRSKYFKEIKAMIEQIEEVYPFRSHDELGLNNMTGRQWIGDRWFFGVKTEQLVNGDSVVATDYKDYLKIVMEHLD.

The sequence is that of SPbeta prophage-derived uncharacterized protein YosC (yosC) from Bacillus subtilis (strain 168).